A 495-amino-acid polypeptide reads, in one-letter code: Lysine--tRNA ligase (495 aa).

Residues Glu406 and Glu413 each coordinate Mg(2+).

It belongs to the class-II aminoacyl-tRNA synthetase family. Homodimer. It depends on Mg(2+) as a cofactor.

It is found in the cytoplasm. The catalysed reaction is tRNA(Lys) + L-lysine + ATP = L-lysyl-tRNA(Lys) + AMP + diphosphate. The chain is Lysine--tRNA ligase from Leptospira interrogans serogroup Icterohaemorrhagiae serovar copenhageni (strain Fiocruz L1-130).